The following is a 463-amino-acid chain: Chromosomal replication initiator protein DnaA (463 aa).

The tract at residues 1 to 83 is domain I, interacts with DnaA modulators; the sequence is MSTNQIILTD…LQLFQHYNNT (83 aa). The interval 83–124 is domain II; sequence TIKSIEIITKELPGTTQTVTELPTKTFADIGSSELNSENIFS. The domain III, AAA+ region stretch occupies residues 125-343; sequence TLDVRFTFDN…GALNKVIAHS (219 aa). ATP-binding residues include glycine 171, glycine 173, lysine 174, and threonine 175. A domain IV, binds dsDNA region spans residues 344-463; that stretch reads NFTLKEITLE…INLLMKILQN (120 aa).

The protein belongs to the DnaA family. As to quaternary structure, oligomerizes as a right-handed, spiral filament on DNA at oriC.

Its subcellular location is the cytoplasm. In terms of biological role, plays an essential role in the initiation and regulation of chromosomal replication. ATP-DnaA binds to the origin of replication (oriC) to initiate formation of the DNA replication initiation complex once per cell cycle. Binds the DnaA box (a 9 base pair repeat at the origin) and separates the double-stranded (ds)DNA. Forms a right-handed helical filament on oriC DNA; dsDNA binds to the exterior of the filament while single-stranded (ss)DNA is stabiized in the filament's interior. The ATP-DnaA-oriC complex binds and stabilizes one strand of the AT-rich DNA unwinding element (DUE), permitting loading of DNA polymerase. After initiation quickly degrades to an ADP-DnaA complex that is not apt for DNA replication. Binds acidic phospholipids. The protein is Chromosomal replication initiator protein DnaA of Rickettsia conorii (strain ATCC VR-613 / Malish 7).